The primary structure comprises 447 residues: METLRFSSNTMQVSFVCQRCNQPLKLDTSFNVLDRMTIHELTAPLVMVTANKQQDSGESSSFPEETFLENKQDGVARKFIPPARMMSAESTNSFTLIGEASDGGTMENLSRRLKVTSNLFDIMSGQTDIDHPLCEECTDTLLDHLDTQLNITENECQNYKSCLELLSQLPEEEEASLLNALQQLKQEEESLIQELESIETKREAVAKELDEGRNHSQLMDTEELRYQKEYCEFKRQQLELDDDLKSVDNQMRYCQIQLDKLKKTNVFNATFHIWHSGQFGTINNFRLGRLPSVPVEWNEINAAWGQTVLLLHALASKMGLCFQRYQLVPYGNHSYLESLSDKSKELPLYCSGGLRFFWDNKFDHAMVAFLDCVQQFKEEVEKDDTGFCLPYRMDVDKGKIEDTGGSGGSYSIKTQFNSEEQWTKALKFMLTNLKWGLAWVSSQFYNR.

The BH3 motif lies at 105 to 124 (TMENLSRRLKVTSNLFDIMS). The segment at 109-156 (LSRRLKVTSNLFDIMSGQTDIDHPLCEECTDTLLDHLDTQLNITENEC) is interaction with BCL2 and BCL2L1 isoform Bcl-X(L). A coiled-coil region spans residues 140–214 (TLLDHLDTQL…VAKELDEGRN (75 aa)). The tract at residues 242-447 (DDLKSVDNQM…AWVSSQFYNR (206 aa)) is evolutionary conserved domain (ECD). A Glycyl lysine isopeptide (Lys-Gly) (interchain with G-Cter in ubiquitin) cross-link involves residue Lys399. The segment at 422-447 (WTKALKFMLTNLKWGLAWVSSQFYNR) is required for membrane-association.

This sequence belongs to the beclin family. In terms of assembly, component of the PI3K (PI3KC3/PI3K-III/class III phosphatidylinositol 3-kinase) complex. Interacts with the poly-Gln domain of ATXN3; the interaction causes deubiquitination at Lys-399 and stabilizes BECN1. In terms of processing, polyubiquitinated at Lys-399 with 'Lys-48'-linkages. 'Lys-48'-linked polyubiquitination of Lys-399 leads to degradation. Deubiquitinated by ATXN3, leading to stabilization.

Its subcellular location is the cytoplasm. It is found in the golgi apparatus. It localises to the trans-Golgi network membrane. The protein localises to the endosome membrane. The protein resides in the endoplasmic reticulum membrane. Its subcellular location is the mitochondrion membrane. It is found in the endosome. It localises to the cytoplasmic vesicle. The protein localises to the autophagosome. Functionally, plays a central role in autophagy. Acts as a core subunit of different PI3K complex forms that mediate formation of phosphatidylinositol 3-phosphate and are believed to play a role in multiple membrane trafficking pathways: PI3KC3-C1 is involved in initiation of autophagosomes and PI3KC3-C2 in maturation of autophagosomes and endocytosis. Involved in regulation of degradative endocytic trafficking and required for the abscission step in cytokinesis, probably in the context of PI3KC3-C2. Essential for the formation of PI3KC3-C2 but not PI3KC3-C1 PI3K complex forms. Involved in endocytosis including endosome formation in neuronal cells. The sequence is that of Beclin-1 (becn1) from Danio rerio (Zebrafish).